The following is a 206-amino-acid chain: MELKVTTLEGKEAGSVQLSDEIFGLDPRVDIIQRCVNWQLAKRQAGTHKAKGRAEVWRTGKKMYKQKGTGGARHGSQRVPQFRGGGRAFGPVVRSHAFDLPKKVRALALKHALSAKAKDGGLIVIESATLEAAKTKALVGHFSGLGLTSALIIDGAELNNGFAVAARNIPNIDVLPIQGINVYDILRRQKLVLTKAAVDALEARFK.

The protein belongs to the universal ribosomal protein uL4 family. As to quaternary structure, part of the 50S ribosomal subunit.

Functionally, one of the primary rRNA binding proteins, this protein initially binds near the 5'-end of the 23S rRNA. It is important during the early stages of 50S assembly. It makes multiple contacts with different domains of the 23S rRNA in the assembled 50S subunit and ribosome. Forms part of the polypeptide exit tunnel. The chain is Large ribosomal subunit protein uL4 from Rhodopseudomonas palustris (strain BisB18).